Here is a 796-residue protein sequence, read N- to C-terminus: Probable coatomer subunit beta' (796 aa).

WD repeat units follow at residues 4–42 (LDFQ…GIWN), 46–84 (QTLV…RVYN), 88–126 (GEKV…KCFN), 131–170 (WKCV…KVWS), 172–214 (GSSV…KVWD), and 218–256 (KACV…KIWH).

The protein belongs to the WD repeat COPB2 family. Oligomeric complex that consists of at least the alpha, beta, beta', gamma, delta, epsilon and zeta subunits.

The protein localises to the cytoplasm. It is found in the golgi apparatus membrane. It localises to the cytoplasmic vesicle. Its subcellular location is the COPI-coated vesicle membrane. Its function is as follows. The coatomer is a cytosolic protein complex that binds to dilysine motifs and reversibly associates with Golgi non-clathrin-coated vesicles, which further mediate biosynthetic protein transport from the ER, via the Golgi up to the trans Golgi network. Coatomer complex is required for budding from Golgi membranes, and is essential for the retrograde Golgi-to-ER transport of dilysine-tagged proteins. The protein is Probable coatomer subunit beta' (sec27) of Schizosaccharomyces pombe (strain 972 / ATCC 24843) (Fission yeast).